The sequence spans 140 residues: Auxin-responsive protein IAA26 (140 aa).

Residues 1-40 (MASYGDDGVELTELTLGPPGASARRARRGRKNGHPPPSSS) form a disordered region. Residues 14 to 18 (LTLGP) carry the EAR-like (transcriptional repression) motif. Over residues 24–33 (RRARRGRKNG) the composition is skewed to basic residues. A PB1 domain is found at 45–130 (AYFVKVSMDG…SCKRMRVMRA (86 aa)).

This sequence belongs to the Aux/IAA family. Homodimers and heterodimers. Expressed in roots, seedlings and flowers.

It localises to the nucleus. Its function is as follows. Aux/IAA proteins are short-lived transcriptional factors that function as repressors of early auxin response genes at low auxin concentrations. This is Auxin-responsive protein IAA26 (IAA26) from Oryza sativa subsp. japonica (Rice).